The following is a 251-amino-acid chain: D-aminoacyl-tRNA deacylase (251 aa).

The protein belongs to the DtdA deacylase family. Monomer. Zn(2+) serves as cofactor.

The catalysed reaction is a D-aminoacyl-tRNA + H2O = a tRNA + a D-alpha-amino acid + H(+). It catalyses the reaction glycyl-tRNA(Ala) + H2O = tRNA(Ala) + glycine + H(+). Functionally, D-aminoacyl-tRNA deacylase with broad substrate specificity. By recycling D-aminoacyl-tRNA to D-amino acids and free tRNA molecules, this enzyme counteracts the toxicity associated with the formation of D-aminoacyl-tRNA entities in vivo. This Pyrobaculum calidifontis (strain DSM 21063 / JCM 11548 / VA1) protein is D-aminoacyl-tRNA deacylase.